The chain runs to 78 residues: Small ribosomal subunit protein bS20 (78 aa).

This sequence belongs to the bacterial ribosomal protein bS20 family.

Its function is as follows. Binds directly to 16S ribosomal RNA. In Streptococcus pneumoniae serotype 4 (strain ATCC BAA-334 / TIGR4), this protein is Small ribosomal subunit protein bS20.